The primary structure comprises 235 residues: 2-C-methyl-D-erythritol 4-phosphate cytidylyltransferase (235 aa).

Belongs to the IspD/TarI cytidylyltransferase family. IspD subfamily.

The catalysed reaction is 2-C-methyl-D-erythritol 4-phosphate + CTP + H(+) = 4-CDP-2-C-methyl-D-erythritol + diphosphate. It functions in the pathway isoprenoid biosynthesis; isopentenyl diphosphate biosynthesis via DXP pathway; isopentenyl diphosphate from 1-deoxy-D-xylulose 5-phosphate: step 2/6. Catalyzes the formation of 4-diphosphocytidyl-2-C-methyl-D-erythritol from CTP and 2-C-methyl-D-erythritol 4-phosphate (MEP). The sequence is that of 2-C-methyl-D-erythritol 4-phosphate cytidylyltransferase from Leptospira borgpetersenii serovar Hardjo-bovis (strain L550).